Consider the following 500-residue polypeptide: MLDDRKFSEQELVRRNKYKNLVDQNKDPYKITNWKRNTTLLKLNEKYKDYSKEELLNLTQELVIVAGRIKLYREAGKKAAFVNIDDQDSSIQLYVRLDEIGQEAFEDFRDLDLGDIIGVKGNMMRTDHGELSIRCKEVVLLSKALRPLPDKHAGIQDIEEKYRRRYVDLIMNHDVRKTFQARTKIIRTMQNFLDNRGYMEVETPILHSLKGGASAKPFVTHYNVLNTDVYLRIATELHLKRLIVGGFEGVYEIGRIFRNEGMSTRHNPEFTSIELYVAYEDMFFLMDLTEEIFRVCNSAVNSSSVIEYNNVKIDLSKPFKRLHMVDGIKQVTGVDFWQEMTVEQALELAKKHNVYVEKHQESVGHIINLFYEEFVESTIVEPTFVYGHPKEISPLAKSNPNDPRFTDRFELFIIGREYANAFSELNDPIDQYERFKAQLEEESKGNDEANDMDIDFVEALEHAMPPTAGIGIGIDRLVMLLTNCDSIKDVLLFPQMKPKE.

Residues Glu410 and Glu417 each coordinate Mg(2+).

Belongs to the class-II aminoacyl-tRNA synthetase family. Homodimer. The cofactor is Mg(2+).

It localises to the cytoplasm. The catalysed reaction is tRNA(Lys) + L-lysine + ATP = L-lysyl-tRNA(Lys) + AMP + diphosphate. In Mycoplasma capricolum subsp. capricolum (strain California kid / ATCC 27343 / NCTC 10154), this protein is Lysine--tRNA ligase.